Here is a 305-residue protein sequence, read N- to C-terminus: MNNYPTALFLMGPTASGKTDLAIKLALQCDCEIISVDSALIYKGMDIGTAKPSNHELQQVPHALVDIIDPLESYSAGDFREDALSLMQEITDRGHTPLLVGGTMLYYKALVDGLSPLPSANPKVRAQIEKEALENGWQALHDKLEQIDPVSAARIHVNDPQRLARALEVFRISGKSLTELTKVKSDPIPYNIKQFAIAPLEKSVLHARIEQRFELMLESGFEQEVRKLYQRGDLHLDLPSMRCVGYRQMWEYLQGTMDYEEMRFRGIVATRQLAKRQMTWLRGWQNVTWLETGHADNFERIKAML.

Position 12–19 (12–19) interacts with ATP; it reads GPTASGKT. Residue 14-19 participates in substrate binding; it reads TASGKT. Interaction with substrate tRNA regions lie at residues 37–40, 161–165, and 242–247; these read DSAL, QRLAR, and RCVGYR.

It belongs to the IPP transferase family. In terms of assembly, monomer. Mg(2+) is required as a cofactor.

It catalyses the reaction adenosine(37) in tRNA + dimethylallyl diphosphate = N(6)-dimethylallyladenosine(37) in tRNA + diphosphate. Its function is as follows. Catalyzes the transfer of a dimethylallyl group onto the adenine at position 37 in tRNAs that read codons beginning with uridine, leading to the formation of N6-(dimethylallyl)adenosine (i(6)A). The chain is tRNA dimethylallyltransferase from Psychromonas ingrahamii (strain DSM 17664 / CCUG 51855 / 37).